The following is a 467-amino-acid chain: MSSIRLYNTLTRKKETFEPLEPNKVKMYVCGPTVYNYIHIGNARAAIVFDTIRRYLEFRGYDVTYVSNFTDVDDKLIRAARELGESVPAIAERFIEAYFEDIEALGCKKADIHPRVTENIETIIEFIQALIDKGYAYEVDGDVYYRTRKFDGYGKLSHQSIDELQAGARIEVGEKKDDPLDFALWKAAKEGEISWDSPWGKGRPGWHIECSAMARKYLGDTIDIHAGGQDLTFPHHENEIAQSEALTGKPFAKYWLHNGYLNINNEKMSKSLGNFVLVHDIIRQIDPQVLRFFMLSVHYRHPINYSEELLESARRGLERLRTAYGNLQHRLGASTNLTDNDGEWLSRLADIRASFIREMDDDFNTANGIAVLFELAKQANLYLQEKTTSENVIHAFLREFEQLMDVLGLTLKQEELLDEEIEALIRQRNEARKNRDFALADRIRDELKAKNIILEDTPQGTRWKRGS.

Cysteine 30 serves as a coordination point for Zn(2+). Positions 32 to 42 match the 'HIGH' region motif; that stretch reads PTVYNYIHIGN. Zn(2+)-binding residues include cysteine 210, histidine 235, and glutamate 239. The 'KMSKS' region motif lies at 267–271; sequence KMSKS. Residue lysine 270 coordinates ATP. A Phosphoserine modification is found at serine 271.

The protein belongs to the class-I aminoacyl-tRNA synthetase family. Monomer. Zn(2+) serves as cofactor.

It is found in the cytoplasm. The catalysed reaction is tRNA(Cys) + L-cysteine + ATP = L-cysteinyl-tRNA(Cys) + AMP + diphosphate. This is Cysteine--tRNA ligase from Geobacillus thermodenitrificans (strain NG80-2).